The chain runs to 330 residues: Aspartate--ammonia ligase (330 aa).

The protein belongs to the class-II aminoacyl-tRNA synthetase family. AsnA subfamily.

The protein resides in the cytoplasm. It carries out the reaction L-aspartate + NH4(+) + ATP = L-asparagine + AMP + diphosphate + H(+). It participates in amino-acid biosynthesis; L-asparagine biosynthesis; L-asparagine from L-aspartate (ammonia route): step 1/1. This is Aspartate--ammonia ligase from Streptococcus pneumoniae serotype 2 (strain D39 / NCTC 7466).